The sequence spans 368 residues: o-succinylbenzoate synthase (368 aa).

Catalysis depends on lysine 183, which acts as the Proton donor. The Mg(2+) site is built by aspartate 213, glutamate 239, and aspartate 264. The active-site Proton acceptor is the lysine 290.

This sequence belongs to the mandelate racemase/muconate lactonizing enzyme family. MenC type 1 subfamily. In terms of assembly, monomer. Requires a divalent metal cation as cofactor.

It carries out the reaction (1R,6R)-6-hydroxy-2-succinyl-cyclohexa-2,4-diene-1-carboxylate = 2-succinylbenzoate + H2O. Its pathway is quinol/quinone metabolism; 1,4-dihydroxy-2-naphthoate biosynthesis; 1,4-dihydroxy-2-naphthoate from chorismate: step 4/7. It participates in cofactor biosynthesis; phylloquinone biosynthesis. Functionally, converts 2-succinyl-6-hydroxy-2,4-cyclohexadiene-1-carboxylate (SHCHC) to 2-succinylbenzoate (OSB). Does not show N-succinylamino acid racemase (NSAR) activity with N-succinyl-L-phenylglycine as substrate. The polypeptide is o-succinylbenzoate synthase (Desulfotalea psychrophila (strain LSv54 / DSM 12343)).